We begin with the raw amino-acid sequence, 368 residues long: F-box only protein 28 (368 aa).

The span at 1–11 shows a compositional bias: basic and acidic residues; the sequence is MAAASEERMAE. The segment at 1–57 is disordered; the sequence is MAAASEERMAEEGGGGHGDGGSPSAIASTQRLPPPPPPQPPQPGSQAPPAPALAPDQ. Positions 12-21 are enriched in gly residues; the sequence is EGGGGHGDGG. Residues 32-52 show a composition bias toward pro residues; sequence LPPPPPPQPPQPGSQAPPAPA. An F-box domain is found at 61 to 109; the sequence is NNTLVALPIVAIENILSFMSYDEISQLRLVCKRMDLVCQRMLNQGFLKV. Residues serine 235 and serine 242 each carry the phosphoserine modification. Threonine 270 is subject to Phosphothreonine. The interval 328–368 is disordered; that stretch reads MESAVGNSSGSGQSEESPRKRKKAAEAIDSLRKSKRLRNRK. Position 344 is a phosphoserine (serine 344).

In terms of assembly, part of a SCF (SKP1-cullin-F-box) protein ligase complex.

The protein localises to the chromosome. It is found in the centromere. Its subcellular location is the kinetochore. Probably recognizes and binds to some phosphorylated proteins and promotes their ubiquitination and degradation. This chain is F-box only protein 28 (FBXO28), found in Bos taurus (Bovine).